Consider the following 208-residue polypeptide: MKIVEIKHPLVRHKLGLMRICDISTKRFRELSSELGSLLTYVATDDLEVEIVTIKGWCGLVKIARIKGKKITVVPILRAGLGMMNGVLEHLPSARISIIGIYRNEITFEPIPYFHKLVSNINERMAMVLDPMLATGGSIIATIDLLKKFGCNNIKVLSIVAAPEGIKALEEKHPDIELYLASIDQKINKNGYIIPGFGDAGDKTFGTK.

5-phospho-alpha-D-ribose 1-diphosphate is bound by residues R78, R103, and 130–138; that span reads DPMLATGGS. Uracil contacts are provided by residues I193 and 198–200; that span reads GDA. D199 is a 5-phospho-alpha-D-ribose 1-diphosphate binding site.

This sequence belongs to the UPRTase family. Requires Mg(2+) as cofactor.

It carries out the reaction UMP + diphosphate = 5-phospho-alpha-D-ribose 1-diphosphate + uracil. Its pathway is pyrimidine metabolism; UMP biosynthesis via salvage pathway; UMP from uracil: step 1/1. Its activity is regulated as follows. Allosterically activated by GTP. In terms of biological role, catalyzes the conversion of uracil and 5-phospho-alpha-D-ribose 1-diphosphate (PRPP) to UMP and diphosphate. The protein is Uracil phosphoribosyltransferase of Blochmanniella pennsylvanica (strain BPEN).